Consider the following 736-residue polypeptide: Elongation factor 2 (736 aa).

In terms of domain architecture, tr-type G spans 18 to 234 (TRVRNIGIIA…VIDAYTASDK (217 aa)). GTP-binding positions include 27–34 (AHVDHGKT), 93–97 (DTPGH), and 147–150 (NKVD). His-603 is subject to Diphthamide.

It belongs to the TRAFAC class translation factor GTPase superfamily. Classic translation factor GTPase family. EF-G/EF-2 subfamily.

It is found in the cytoplasm. Its function is as follows. Catalyzes the GTP-dependent ribosomal translocation step during translation elongation. During this step, the ribosome changes from the pre-translocational (PRE) to the post-translocational (POST) state as the newly formed A-site-bound peptidyl-tRNA and P-site-bound deacylated tRNA move to the P and E sites, respectively. Catalyzes the coordinated movement of the two tRNA molecules, the mRNA and conformational changes in the ribosome. In Saccharolobus solfataricus (strain ATCC 35092 / DSM 1617 / JCM 11322 / P2) (Sulfolobus solfataricus), this protein is Elongation factor 2 (fusA).